Consider the following 132-residue polypeptide: Small ribosomal subunit protein uS8 (132 aa).

It belongs to the universal ribosomal protein uS8 family. In terms of assembly, part of the 30S ribosomal subunit. Contacts proteins S5 and S12.

Functionally, one of the primary rRNA binding proteins, it binds directly to 16S rRNA central domain where it helps coordinate assembly of the platform of the 30S subunit. This Staphylococcus aureus (strain USA300) protein is Small ribosomal subunit protein uS8.